The sequence spans 1488 residues: Chromosome partition protein MukB (1488 aa).

Residue 34 to 41 (GGNGAGKS) coordinates ATP. Coiled coils occupy residues 326–413 (LEAD…QTRA), 444–472 (LDTF…QTAH), and 509–602 (RHLA…RRAP). The segment at 666–783 (PGGAEDQRLN…SLPIFGRAAR (118 aa)) is flexible hinge. Coiled-coil stretches lie at residues 835 to 923 (EAEI…AKLE), 977 to 1116 (EMLS…AKAG), and 1209 to 1265 (VEAI…LQSV).

The protein belongs to the SMC family. MukB subfamily. As to quaternary structure, homodimerization via its hinge domain. Binds to DNA via its C-terminal region. Interacts, and probably forms a ternary complex, with MukE and MukF via its C-terminal region. The complex formation is stimulated by calcium or magnesium. Interacts with tubulin-related protein FtsZ.

It is found in the cytoplasm. The protein localises to the nucleoid. In terms of biological role, plays a central role in chromosome condensation, segregation and cell cycle progression. Functions as a homodimer, which is essential for chromosome partition. Involved in negative DNA supercoiling in vivo, and by this means organize and compact chromosomes. May achieve or facilitate chromosome segregation by condensation DNA from both sides of a centrally located replisome during cell division. This Salmonella paratyphi C (strain RKS4594) protein is Chromosome partition protein MukB.